The chain runs to 373 residues: Ras association domain-containing protein 7 (373 aa).

The Ras-associating domain maps to 6 to 89; it reads AAMELKVWVD…VQFVLRRTGP (84 aa). The tract at residues 122–150 is disordered; sequence CEPRKTLTPEPAPSLSRPGPAAPVTPTPG. Coiled-coil stretches lie at residues 175-227 and 248-297; these read WEQE…AAEA and QERQ…QFIQ. The disordered stretch occupies residues 300 to 356; it reads GAALPPPPRPDRGPPGTQGPLPPAREESLLGAPSESHAGAQPRPRGGPHDAELLEVA.

In terms of assembly, interacts with MAP2K7 and GTP-bound NRAS. In terms of processing, polyubiquitinated and degraded by the proteasome upon prolonged stress stimuli.

The protein localises to the cytoplasm. The protein resides in the cytoskeleton. It localises to the microtubule organizing center. Its subcellular location is the centrosome. Negatively regulates stress-induced JNK activation and apoptosis by promoting MAP2K7 phosphorylation and inhibiting its ability to activate JNK. Following prolonged stress, anti-apoptotic effect stops because of degradation of RASSF7 protein via the ubiquitin-proteasome pathway. Required for the activation of AURKB and chromosomal congression during mitosis where it stimulates microtubule polymerization. The sequence is that of Ras association domain-containing protein 7 (RASSF7) from Homo sapiens (Human).